The following is a 657-amino-acid chain: Probable Xaa-Pro aminopeptidase P (657 aa).

Mn(2+) is bound by residues Asp-453, Asp-464, Glu-562, and Glu-576.

It belongs to the peptidase M24B family. It depends on Mn(2+) as a cofactor.

It catalyses the reaction Release of any N-terminal amino acid, including proline, that is linked to proline, even from a dipeptide or tripeptide.. In terms of biological role, catalyzes the removal of a penultimate prolyl residue from the N-termini of peptides. The protein is Probable Xaa-Pro aminopeptidase P (ampp) of Talaromyces stipitatus (strain ATCC 10500 / CBS 375.48 / QM 6759 / NRRL 1006) (Penicillium stipitatum).